Reading from the N-terminus, the 448-residue chain is UPF0210 protein Pisl_0759 (448 aa).

It belongs to the UPF0210 family.

This chain is UPF0210 protein Pisl_0759, found in Pyrobaculum islandicum (strain DSM 4184 / JCM 9189 / GEO3).